We begin with the raw amino-acid sequence, 1119 residues long: MNFSNILSNFFGNKSQRDLNEISPFVQKTLTIYSSVENLSNDELRGRTRELMILLQKEIEMEKNKIDELKILVESLELEDRETVWNEIDEIEKDIIEKQERILDKILPEVFAIVKDTARRFAENETIEVTATDFDRQLAVFYDFVSIQNDKAIYQNHWFAGGNEIIWNMIHYNVQLFGGIVLHNCNPKKYIKDIEGHNFSKKIKGYIAEMATGEGKTLAATLPVFLNAMTHNGVHVVTINDYLSKRDSEWMGPLYMFHGLSVDCIDKHRPNSNERRKAYEADITFGTNSEFGFDYLRDNMAVNPQDLVQRKHNYAIIDEVDSVLIDDARTPLIISGPVAKEDDQLYVLYRSRVENLVNVQKKLTNNLLIEAKKLMALEDPKQHEEGLKLLFRSYKGMPKNKALIKYLSEPGIKMSMLKTEEFYMQQQNREMYIITDELYFVIDEKNRSVELTDRGIDILTGNSDDPEFFVLPDLGTKFAEIENELITKEEKQLKKDELMQSYAAKSERVHTINQLLKAYCLFEKDDAYVVLDNRVMIVDEQTGRIMEGRRYSDGLHQAIEAKEHVKIEAATQTFATITLQNYFRMYRKLAGMTGTAETEAGEFWDIYKLDVVVIPTNQLVIRNDKDDRLYKTAREKYAAIINEIITLREHGRPVLVGTTSVEISELLSRMLNMRKIHHNVLNAKLHQKEAEIVAQAGQTGTVTIATNMAGRGTDIKLSTKARDAGGLAIIGTERHDSRRIDRQLRGRSGRQGDPGSSVFFISLEDDLMRLFASERIAKMMDKMGFKEGEVLEAKMLNNAVERAQKKVEENNFGIRKRLLEYDDVMNSQREVIYKRRHHALIGERIGLDIINMIYDVVNSIVEQYSNFNDYKGLKSELYKTLAIEPPISEEEFKNMKTTHLTEVIFNTSIVNFKWKNEQIVQIVQPRIERAYKEVGNKYQNIIVPITDGRKIYNVSYHLKTVHDTKSREIIKSFEKAVLLSSIDEAWREHLREMDELHNSVQNASYENKDPLLIYKLESFNLFKNMIDTMNKRVISILMRGQIYIKNQEVREATPEKKTNYNHYKVRKDELIESGRIQGRTAKRDTRILQKIEPIRVEKTVRRNDPCPCGSGKKYKNCCF.

ATP is bound by residues Q175, G213 to T217, and D714. Zn(2+) contacts are provided by C1106, C1108, C1117, and C1118.

Belongs to the SecA family. As to quaternary structure, monomer and homodimer. Part of the essential Sec protein translocation apparatus which comprises SecA, SecYEG and auxiliary proteins SecDF. Other proteins may also be involved. Zn(2+) is required as a cofactor.

Its subcellular location is the cell inner membrane. It is found in the cytoplasm. The catalysed reaction is ATP + H2O + cellular proteinSide 1 = ADP + phosphate + cellular proteinSide 2.. Part of the Sec protein translocase complex. Interacts with the SecYEG preprotein conducting channel. Has a central role in coupling the hydrolysis of ATP to the transfer of proteins into and across the cell membrane, serving as an ATP-driven molecular motor driving the stepwise translocation of polypeptide chains across the membrane. This is Protein translocase subunit SecA from Azobacteroides pseudotrichonymphae genomovar. CFP2.